Here is a 156-residue protein sequence, read N- to C-terminus: Transcriptional repressor NrdR (156 aa).

A zinc finger lies at 3–34 (CPKCSSTHSRVVDSRHADDANAIRRRRECENC). The ATP-cone domain maps to 49–139 (LIVVKKDGTR…VYKEFKDVDQ (91 aa)).

It belongs to the NrdR family. Requires Zn(2+) as cofactor.

Its function is as follows. Negatively regulates transcription of bacterial ribonucleotide reductase nrd genes and operons by binding to NrdR-boxes. This chain is Transcriptional repressor NrdR, found in Staphylococcus haemolyticus (strain JCSC1435).